Consider the following 634-residue polypeptide: DNA-directed RNA polymerase subunit gamma (634 aa).

Zn(2+) contacts are provided by Cys74, Cys76, Cys89, and Cys92. Mg(2+)-binding residues include Asp471, Asp473, and Asp475.

Belongs to the RNA polymerase beta' chain family. RpoC1 subfamily. In terms of assembly, in cyanobacteria the RNAP catalytic core is composed of 2 alpha, 1 beta, 1 beta', 1 gamma and 1 omega subunit. When a sigma factor is associated with the core the holoenzyme is formed, which can initiate transcription. Mg(2+) is required as a cofactor. The cofactor is Zn(2+).

The catalysed reaction is RNA(n) + a ribonucleoside 5'-triphosphate = RNA(n+1) + diphosphate. Its function is as follows. DNA-dependent RNA polymerase catalyzes the transcription of DNA into RNA using the four ribonucleoside triphosphates as substrates. The sequence is that of DNA-directed RNA polymerase subunit gamma from Synechococcus sp. (strain CC9902).